Here is a 130-residue protein sequence, read N- to C-terminus: Large ribosomal subunit protein bL17 (130 aa).

It belongs to the bacterial ribosomal protein bL17 family. In terms of assembly, part of the 50S ribosomal subunit. Contacts protein L32.

The sequence is that of Large ribosomal subunit protein bL17 from Delftia acidovorans (strain DSM 14801 / SPH-1).